The following is a 359-amino-acid chain: Holliday junction branch migration complex subunit RuvB (359 aa).

The disordered stretch occupies residues 1 to 22 (MAIVSSNAEPSKGAPRPKPSRV). A large ATPase domain (RuvB-L) region spans residues 13–204 (GAPRPKPSRV…FGLIQRLEFY (192 aa)). 9 residues coordinate ATP: Leu43, Arg44, Gly85, Lys88, Thr89, Thr90, Arg194, Tyr204, and Arg241. Thr89 contributes to the Mg(2+) binding site. Residues 205 to 276 (GQEDLQAIVM…LVDEALTLHR (72 aa)) are small ATPAse domain (RuvB-S). Residues 279–359 (GKGLDASDRR…GWPADEGDAA (81 aa)) are head domain (RuvB-H). DNA contacts are provided by Arg334 and Arg339.

The protein belongs to the RuvB family. As to quaternary structure, homohexamer. Forms an RuvA(8)-RuvB(12)-Holliday junction (HJ) complex. HJ DNA is sandwiched between 2 RuvA tetramers; dsDNA enters through RuvA and exits via RuvB. An RuvB hexamer assembles on each DNA strand where it exits the tetramer. Each RuvB hexamer is contacted by two RuvA subunits (via domain III) on 2 adjacent RuvB subunits; this complex drives branch migration. In the full resolvosome a probable DNA-RuvA(4)-RuvB(12)-RuvC(2) complex forms which resolves the HJ.

It localises to the cytoplasm. The enzyme catalyses ATP + H2O = ADP + phosphate + H(+). In terms of biological role, the RuvA-RuvB-RuvC complex processes Holliday junction (HJ) DNA during genetic recombination and DNA repair, while the RuvA-RuvB complex plays an important role in the rescue of blocked DNA replication forks via replication fork reversal (RFR). RuvA specifically binds to HJ cruciform DNA, conferring on it an open structure. The RuvB hexamer acts as an ATP-dependent pump, pulling dsDNA into and through the RuvAB complex. RuvB forms 2 homohexamers on either side of HJ DNA bound by 1 or 2 RuvA tetramers; 4 subunits per hexamer contact DNA at a time. Coordinated motions by a converter formed by DNA-disengaged RuvB subunits stimulates ATP hydrolysis and nucleotide exchange. Immobilization of the converter enables RuvB to convert the ATP-contained energy into a lever motion, pulling 2 nucleotides of DNA out of the RuvA tetramer per ATP hydrolyzed, thus driving DNA branch migration. The RuvB motors rotate together with the DNA substrate, which together with the progressing nucleotide cycle form the mechanistic basis for DNA recombination by continuous HJ branch migration. Branch migration allows RuvC to scan DNA until it finds its consensus sequence, where it cleaves and resolves cruciform DNA. The chain is Holliday junction branch migration complex subunit RuvB from Synechococcus sp. (strain CC9311).